The chain runs to 305 residues: Protoheme IX farnesyltransferase (305 aa).

9 helical membrane-spanning segments follow: residues 29–49, 51–71, 101–121, 123–143, 151–171, 177–197, 221–241, 244–264, and 283–303; these read VTQL…PGMV, WSVL…AFAI, TLIF…VFAN, LTMW…TILL, IVIG…AVSG, AWFL…ALAL, LLHI…PFVY, SGYI…GYAW, and ILYL…KFVP.

Belongs to the UbiA prenyltransferase family. Protoheme IX farnesyltransferase subfamily.

It localises to the cell inner membrane. The catalysed reaction is heme b + (2E,6E)-farnesyl diphosphate + H2O = Fe(II)-heme o + diphosphate. The protein operates within porphyrin-containing compound metabolism; heme O biosynthesis; heme O from protoheme: step 1/1. Its function is as follows. Converts heme B (protoheme IX) to heme O by substitution of the vinyl group on carbon 2 of heme B porphyrin ring with a hydroxyethyl farnesyl side group. This chain is Protoheme IX farnesyltransferase, found in Cupriavidus metallidurans (strain ATCC 43123 / DSM 2839 / NBRC 102507 / CH34) (Ralstonia metallidurans).